Here is a 485-residue protein sequence, read N- to C-terminus: Glutamyl-tRNA(Gln) amidotransferase subunit A (485 aa).

Residues K79 and S154 each act as charge relay system in the active site. The active-site Acyl-ester intermediate is S178.

Belongs to the amidase family. GatA subfamily. In terms of assembly, heterotrimer of A, B and C subunits.

It catalyses the reaction L-glutamyl-tRNA(Gln) + L-glutamine + ATP + H2O = L-glutaminyl-tRNA(Gln) + L-glutamate + ADP + phosphate + H(+). In terms of biological role, allows the formation of correctly charged Gln-tRNA(Gln) through the transamidation of misacylated Glu-tRNA(Gln) in organisms which lack glutaminyl-tRNA synthetase. The reaction takes place in the presence of glutamine and ATP through an activated gamma-phospho-Glu-tRNA(Gln). The protein is Glutamyl-tRNA(Gln) amidotransferase subunit A of Staphylococcus aureus (strain MW2).